The primary structure comprises 444 residues: Tol-Pal system protein TolB (444 aa).

Residues 1–18 form the signal peptide; sequence MKNIIYCILLLFSFNSYA.

Belongs to the TolB family. As to quaternary structure, the Tol-Pal system is composed of five core proteins: the inner membrane proteins TolA, TolQ and TolR, the periplasmic protein TolB and the outer membrane protein Pal. They form a network linking the inner and outer membranes and the peptidoglycan layer.

It is found in the periplasm. Its function is as follows. Part of the Tol-Pal system, which plays a role in outer membrane invagination during cell division and is important for maintaining outer membrane integrity. This chain is Tol-Pal system protein TolB, found in Rickettsia bellii (strain OSU 85-389).